The primary structure comprises 309 residues: Ecotin-like protein 3 (309 aa).

The interval 140–309 is disordered; it reads QQELEAPAVS…KSGRDSRRNS (170 aa). Residues 156–167 show a composition bias toward basic and acidic residues; sequence VRERQNNPEGHA. A compositionally biased stretch (low complexity) spans 168-180; the sequence is HPVVVHSVESPEV. Residues 181-190 show a composition bias toward basic and acidic residues; it reads SGHKDGDQPM. Positions 196–205 are enriched in low complexity; sequence LKQSCSNSSR. Residues 209-221 are compositionally biased toward polar residues; it reads HSASGSSPKNTPL. Over residues 261-279 the composition is skewed to basic and acidic residues; it reads SDSTSSRKDDQDSGYEKKV. The span at 290 to 299 shows a compositional bias: low complexity; that stretch reads SSPKRSASPK.

It belongs to the protease inhibitor I11 (ecotin) family.

This Leishmania braziliensis protein is Ecotin-like protein 3.